The primary structure comprises 1248 residues: Bifunctional autolysin (1248 aa).

The signal sequence occupies residues 1-29 (MAKKFNYKLPSMVALTLVGSAVTAHQVQA). Positions 103 to 134 (GDTRANQSATTNNTQPVAKSTSTTAPKTNTNV) are disordered. The interval 191 to 767 (ASAQPRSVAA…AVAQPKTAVK (577 aa)) is N-acetylmuramoyl-L-alanine amidase. 7 GW domains span residues 435 to 509 (TVAA…YNTA), 511 to 585 (SPVN…DTAK), 604 to 678 (TVSS…YNNA), 680 to 754 (SPVN…VPAA), 776 to 851 (TTQT…VQNL), 853 to 928 (KEVK…APTA), and 935 to 1009 (AAKD…KELI). Positions 768–1248 (AYTVTKPQTT…GKYFDIPQYK (481 aa)) are endo-beta-N-acetylglucosaminidase.

The protein in the N-terminal section; belongs to the N-acetylmuramoyl-L-alanine amidase 2 family. In the C-terminal section; belongs to the glycosyl hydrolase 73 family. As to quaternary structure, oligomer; forms a ring structure at the cell surface which is important for efficient partitioning of daughter cells after cell division. Undergoes proteolytic processing to generate the two extracellular lytic enzymes, probably at the septal region on the cell surface.

It localises to the secreted. It catalyses the reaction Hydrolyzes the link between N-acetylmuramoyl residues and L-amino acid residues in certain cell-wall glycopeptides.. The catalysed reaction is an N(4)-(oligosaccharide-(1-&gt;3)-[oligosaccharide-(1-&gt;6)]-beta-D-Man-(1-&gt;4)-beta-D-GlcNAc-(1-&gt;4)-alpha-D-GlcNAc)-L-asparaginyl-[protein] + H2O = an oligosaccharide-(1-&gt;3)-[oligosaccharide-(1-&gt;6)]-beta-D-Man-(1-&gt;4)-D-GlcNAc + N(4)-(N-acetyl-beta-D-glucosaminyl)-L-asparaginyl-[protein]. Endohydrolysis of the di-N-acetylchitobiosyl unit in high-mannose glycopeptides and glycoproteins containing the -[(Man)5(GlcNAc)2]-Asn structure. One N-acetyl-D-glucosamine residue remains attached to the protein; the rest of the oligosaccharide is released intact. Cleaves the peptidoglycan connecting the daughter cells at the end of the cell division cycle, resulting in the separation of the two newly divided cells. Acts as an autolysin in penicillin-induced lysis. The protein is Bifunctional autolysin (atl) of Staphylococcus aureus (strain Mu50 / ATCC 700699).